Consider the following 209-residue polypeptide: NADH-ubiquinone oxidoreductase subunit 9 (209 aa).

It belongs to the complex I 30 kDa subunit family. In terms of assembly, complex I is composed of about 30 different subunits.

It localises to the mitochondrion inner membrane. It carries out the reaction a ubiquinone + NADH + 5 H(+)(in) = a ubiquinol + NAD(+) + 4 H(+)(out). In terms of biological role, core subunit of the mitochondrial membrane respiratory chain NADH dehydrogenase (Complex I) that is believed to belong to the minimal assembly required for catalysis. Complex I functions in the transfer of electrons from NADH to the respiratory chain. The immediate electron acceptor for the enzyme is believed to be ubiquinone. The polypeptide is NADH-ubiquinone oxidoreductase subunit 9 (nad9) (Dictyostelium citrinum (Slime mold)).